The chain runs to 238 residues: tRNA (guanine-N(7)-)-methyltransferase (238 aa).

S-adenosyl-L-methionine contacts are provided by glutamate 62, glutamate 87, aspartate 119, and aspartate 141. The active site involves aspartate 141. Residues lysine 145, aspartate 177, and 216–219 (TRYE) contribute to the substrate site.

It belongs to the class I-like SAM-binding methyltransferase superfamily. TrmB family.

It catalyses the reaction guanosine(46) in tRNA + S-adenosyl-L-methionine = N(7)-methylguanosine(46) in tRNA + S-adenosyl-L-homocysteine. Its pathway is tRNA modification; N(7)-methylguanine-tRNA biosynthesis. Functionally, catalyzes the formation of N(7)-methylguanine at position 46 (m7G46) in tRNA. In Novosphingobium aromaticivorans (strain ATCC 700278 / DSM 12444 / CCUG 56034 / CIP 105152 / NBRC 16084 / F199), this protein is tRNA (guanine-N(7)-)-methyltransferase.